The sequence spans 248 residues: B-box zinc finger protein 24 (248 aa).

Zn(2+)-binding residues include Cys-5, Cys-8, Cys-28, His-33, Cys-57, Cys-60, Cys-80, and His-85. The B box-type 1; atypical zinc finger occupies 5-47 (CDVCEKAPATVICCADEAALCPQCDIEIHAANKLASKHQRLHL). A B box-type 2; atypical zinc finger spans residues 57 to 99 (CDICQEKAAFIFCVEDRALLCRDCDESIHVANSRSANHQRFLA). Residues 115-148 (IEKNQPEPSNNQQKANQIPAKSTSQQQQQPSSAT) are disordered. The span at 120–130 (PEPSNNQQKAN) shows a compositional bias: polar residues. The span at 131–148 (QIPAKSTSQQQQQPSSAT) shows a compositional bias: low complexity. A Nuclear localization signal motif is present at residues 226 to 229 (KKPR). The interval 236-248 (DDDEEHFIVPDLG) is interaction with COP1.

Interacts with COP1 WD40 domain. Interacts with HY5 and HYH. Interacts with RCD1 and TRP4. Post-translationally, COP1-mediated ubiquitination and subsequent proteasomal degradation of BBX24/STO occurs in the dark. As to expression, high expression in leaves and lower in roots and flowers.

It localises to the nucleus. In terms of biological role, acts as a negative regulator of seedling photomorphogenesis and light-regulated inhibition of hypocotyl elongation. BBX24/STO and BBX25/STH function as transcriptional corepressors of HY5 activity, leading to the down-regulation of BBX22 expression. BBX24/STO acts additively with BBX25/STH during de-etiolation and the hypocotyl shade avoidance response. Functions as a negative regulator of photomorphogenic UV-B responses by interacting with both COP1 and HY5. May act as a transcription factor in the salt-stress response. This chain is B-box zinc finger protein 24, found in Arabidopsis thaliana (Mouse-ear cress).